The primary structure comprises 419 residues: Putative competence-damage inducible protein (419 aa).

This sequence belongs to the CinA family.

In Lysinibacillus sphaericus (strain C3-41), this protein is Putative competence-damage inducible protein.